Reading from the N-terminus, the 535-residue chain is Pre-mRNA-splicing factor SLU7-A (535 aa).

Residues 21–44 are disordered; it reads EEARKAGLAPAEVDEDGKEINPHI. A CCHC-type zinc finger spans residues 96-109; sequence CQNCGAMTHTAKAC. A compositionally biased stretch (basic and acidic residues) spans 176 to 190; it reads LKKLEEKNNNEKGDD. Disordered stretches follow at residues 176–204 and 489–508; these read LKKL…DLRV and EDLS…NVKY. Residues 191–203 are compositionally biased toward acidic residues; it reads ANSDGEEDEDDLR. The residue at position 193 (Ser193) is a Phosphoserine. The short motif at 486 to 493 is the Nuclear localization signal element; it reads LKKEDLSR. The segment covering 489-501 has biased composition (basic and acidic residues); the sequence is EDLSRREEKDERK.

Belongs to the SLU7 family. In terms of tissue distribution, mainly expressed in tissues undergoing cell proliferation, particularly in lateral organs.

It is found in the nucleus. Functionally, participates in the second catalytic step of pre-mRNA splicing, when the free hydroxyl group of exon I attacks the 3'-splice site to generate spliced mRNA and the excised lariat intron. Together with SMP2, involved in the timing of cell cycle arrest during leaf development, in a STRUWWELPETER (SWP) dependent manner; promotes cell proliferation in developing organs. This Arabidopsis thaliana (Mouse-ear cress) protein is Pre-mRNA-splicing factor SLU7-A.